Consider the following 337-residue polypeptide: Deoxyhypusine hydroxylase (337 aa).

HEAT-like PBS-type repeat units follow at residues 73–99 (LKHE…VLSD) and 106–132 (CRHE…YRDR). Residues His75, Glu76, His108, and Glu109 each contribute to the Fe cation site. Residues 156 to 165 (AERQKEKLRP) show a composition bias toward basic and acidic residues. The segment at 156 to 183 (AERQKEKLRPSDFASIDPAPPMPESDKE) is disordered. HEAT-like PBS-type repeat units follow at residues 202–235 (SRYR…GLSD), 240–266 (FRHE…ALSN), and 273–300 (VRHE…FLHD). Fe cation contacts are provided by His242, Glu243, His275, and Glu276.

Belongs to the deoxyhypusine hydroxylase family. Requires Fe(2+) as cofactor.

The protein resides in the cytoplasm. The protein localises to the nucleus. It catalyses the reaction [eIF5A protein]-deoxyhypusine + AH2 + O2 = [eIF5A protein]-hypusine + A + H2O. It functions in the pathway protein modification; eIF5A hypusination. Its function is as follows. Catalyzes the hydroxylation of the N(6)-(4-aminobutyl)-L-lysine intermediate to form hypusine, an essential post-translational modification only found in mature eIF-5A factor. This chain is Deoxyhypusine hydroxylase, found in Gibberella zeae (strain ATCC MYA-4620 / CBS 123657 / FGSC 9075 / NRRL 31084 / PH-1) (Wheat head blight fungus).